The primary structure comprises 210 residues: Probable nicotinate-nucleotide adenylyltransferase (210 aa).

It belongs to the NadD family.

The catalysed reaction is nicotinate beta-D-ribonucleotide + ATP + H(+) = deamido-NAD(+) + diphosphate. Its pathway is cofactor biosynthesis; NAD(+) biosynthesis; deamido-NAD(+) from nicotinate D-ribonucleotide: step 1/1. Catalyzes the reversible adenylation of nicotinate mononucleotide (NaMN) to nicotinic acid adenine dinucleotide (NaAD). The polypeptide is Probable nicotinate-nucleotide adenylyltransferase (Vesicomyosocius okutanii subsp. Calyptogena okutanii (strain HA)).